The primary structure comprises 61 residues: Large ribosomal subunit protein uL30 (61 aa).

It belongs to the universal ribosomal protein uL30 family. As to quaternary structure, part of the 50S ribosomal subunit.

The chain is Large ribosomal subunit protein uL30 from Corynebacterium urealyticum (strain ATCC 43042 / DSM 7109).